Here is a 513-residue protein sequence, read N- to C-terminus: ATP synthase subunit alpha (513 aa).

169–176 (GDRQTGKT) provides a ligand contact to ATP.

It belongs to the ATPase alpha/beta chains family. As to quaternary structure, F-type ATPases have 2 components, CF(1) - the catalytic core - and CF(0) - the membrane proton channel. CF(1) has five subunits: alpha(3), beta(3), gamma(1), delta(1), epsilon(1). CF(0) has three main subunits: a(1), b(2) and c(9-12). The alpha and beta chains form an alternating ring which encloses part of the gamma chain. CF(1) is attached to CF(0) by a central stalk formed by the gamma and epsilon chains, while a peripheral stalk is formed by the delta and b chains.

The protein resides in the cell inner membrane. It carries out the reaction ATP + H2O + 4 H(+)(in) = ADP + phosphate + 5 H(+)(out). Produces ATP from ADP in the presence of a proton gradient across the membrane. The alpha chain is a regulatory subunit. The protein is ATP synthase subunit alpha of Haemophilus influenzae (strain PittGG).